Here is a 550-residue protein sequence, read N- to C-terminus: Chaperonin GroEL 2 (550 aa).

Residues 30–33 (TLGP), Lys-51, 87–91 (DGTTT), Gly-415, and Asp-496 contribute to the ATP site.

The protein belongs to the chaperonin (HSP60) family. In terms of assembly, forms a cylinder of 14 subunits composed of two heptameric rings stacked back-to-back. Interacts with the co-chaperonin GroES.

The protein resides in the cytoplasm. The enzyme catalyses ATP + H2O + a folded polypeptide = ADP + phosphate + an unfolded polypeptide.. Functionally, together with its co-chaperonin GroES, plays an essential role in assisting protein folding. The GroEL-GroES system forms a nano-cage that allows encapsulation of the non-native substrate proteins and provides a physical environment optimized to promote and accelerate protein folding. The sequence is that of Chaperonin GroEL 2 from Bradyrhizobium diazoefficiens (strain JCM 10833 / BCRC 13528 / IAM 13628 / NBRC 14792 / USDA 110).